The following is a 440-amino-acid chain: Microtubule-associated tumor suppressor 1 homolog (440 aa).

The stretch at 106–401 (IQHLLSEREE…RLSMENEELL (296 aa)) forms a coiled coil. 9 positions are modified to phosphoserine: Ser373, Ser394, Ser415, Ser425, Ser429, Ser431, Ser433, Ser434, and Ser438. The segment at 407 to 440 (GDLCSPKRSPTSSAIPFQSPRNSGSFSSPSISPR) is disordered. Low complexity predominate over residues 425–440 (SPRNSGSFSSPSISPR).

This sequence belongs to the MTUS1 family. Homodimer. Interacts with AGTR2. Interacts with PTPN6. As to expression, present in neurons (at protein level).

It is found in the mitochondrion. The protein localises to the golgi apparatus. The protein resides in the cell membrane. It localises to the nucleus. Its function is as follows. Cooperates with AGTR2 to inhibit ERK2 activation and cell proliferation. May be required for AGTR2 cell surface expression. Together with PTPN6, induces UBE2V2 expression upon angiotensin-II stimulation. The polypeptide is Microtubule-associated tumor suppressor 1 homolog (Mtus1) (Rattus norvegicus (Rat)).